Reading from the N-terminus, the 422-residue chain is Autophagy-related protein 21 (422 aa).

6 WD repeats span residues 1–35 (MGLS…KCFE), 102–153 (SFPH…ITGQ), 166–206 (MTSL…SKSV), 228–268 (VHKG…ESEL), 280–319 (NRPC…RLLS), and 374–414 (KNTK…GSCV). A L/FRRG motif motif is present at residues 276-280 (FRRGN).

The protein belongs to the WD repeat PROPPIN family.

The protein localises to the cytoplasm. The protein resides in the membrane. Its subcellular location is the vacuole membrane. Functionally, required for cytoplasm to vacuole transport (Cvt) vesicles formation and mitophagy. Involved in binding of phosphatidylethanolamine to ATG8 and in recruitment of ATG8 and ATG5 to the pre-autophagosomal structure. Protects ATG8 from ARG4-mediated cleavage. This is Autophagy-related protein 21 (ATG21) from Vanderwaltozyma polyspora (strain ATCC 22028 / DSM 70294 / BCRC 21397 / CBS 2163 / NBRC 10782 / NRRL Y-8283 / UCD 57-17) (Kluyveromyces polysporus).